The chain runs to 214 residues: Cytolysin tenebrosin-B (214 aa).

The signal sequence occupies residues 1–19 (MNRLIIVFIVVTMICAATA). A propeptide spanning residues 20–35 (LSTKRRINKEEKDEKR) is cleaved from the precursor. Residues 38 to 47 (AVAGAVIEGA) form a plays an important role in the hemolytic activity region. The tract at residues 46–65 (GATLTFNVLQTVLKALGDIS) is N-terminal region. Phosphocholine contacts are provided by S89, V122, S140, P142, Y168, Y172, and Y173. The interval 140–155 (SIPFDYNLYSNWWNVK) is trp-rich region, which is important for the binding to lipid membrane. The short motif at 179-181 (RGD) is the Cell attachment site, crucial for protein stability element.

It belongs to the actinoporin family. Sea anemone subfamily. As to quaternary structure, octamer or nonamer in membranes. Monomer in the soluble state.

It is found in the secreted. The protein resides in the nematocyst. Its subcellular location is the target cell membrane. In terms of biological role, pore-forming protein that forms cations-selective hydrophilic pores of around 1 nm and causes cardiac stimulation and cytolysis. Pore formation is a multi-step process that involves specific recognition of membrane sphingomyelin (but neither cholesterol nor phosphatidylcholine) using aromatic rich region and adjacent phosphocholine (POC) binding site, firm binding to the membrane (mainly driven by hydrophobic interactions) accompanied by the transfer of the N-terminal region to the lipid-water interface and finally pore formation after oligomerization of monomers. The sequence is that of Cytolysin tenebrosin-B from Actinia tenebrosa (Australian red waratah sea anemone).